A 184-amino-acid chain; its full sequence is Putative YfeABCD regulator YfeE (184 aa).

3 helical membrane-spanning segments follow: residues 15–35, 84–104, and 162–182; these read IAGW…IINF, LSAG…GLSL, and ILPS…GIMI.

The protein to E.coli YniB.

Its subcellular location is the cell membrane. In terms of biological role, putative regulator of YfeABCD, an ABC transporter locus involved in inorganic iron transport. This Yersinia pestis protein is Putative YfeABCD regulator YfeE (yfeE).